A 539-amino-acid polypeptide reads, in one-letter code: CTP synthase (539 aa).

Positions 1 to 268 are amidoligase domain; it reads MSFKCIFLTG…STFITEKLGL (268 aa). A CTP-binding site is contributed by Ser14. Ser14 contacts UTP. 15 to 20 is an ATP binding site; the sequence is SLGKGL. An L-glutamine-binding site is contributed by Tyr55. Residue Asp72 coordinates ATP. Mg(2+) contacts are provided by Asp72 and Glu142. CTP contacts are provided by residues 149–151, 188–193, and Lys224; these read DIE and KTKPTQ. UTP contacts are provided by residues 188-193 and Lys224; that span reads KTKPTQ. Residues 294–533 form the Glutamine amidotransferase type-1 domain; that stretch reads RIGLVGKYVQ…IQAAILYSRN (240 aa). Residue Gly353 participates in L-glutamine binding. Cys380 (nucleophile; for glutamine hydrolysis) is an active-site residue. L-glutamine-binding positions include 381 to 384, Glu404, and Arg461; that span reads LGMQ. Residues His506 and Glu508 contribute to the active site.

It belongs to the CTP synthase family. Homotetramer.

It carries out the reaction UTP + L-glutamine + ATP + H2O = CTP + L-glutamate + ADP + phosphate + 2 H(+). The catalysed reaction is L-glutamine + H2O = L-glutamate + NH4(+). The enzyme catalyses UTP + NH4(+) + ATP = CTP + ADP + phosphate + 2 H(+). Its pathway is pyrimidine metabolism; CTP biosynthesis via de novo pathway; CTP from UDP: step 2/2. With respect to regulation, allosterically activated by GTP, when glutamine is the substrate; GTP has no effect on the reaction when ammonia is the substrate. The allosteric effector GTP functions by stabilizing the protein conformation that binds the tetrahedral intermediate(s) formed during glutamine hydrolysis. Inhibited by the product CTP, via allosteric rather than competitive inhibition. Functionally, catalyzes the ATP-dependent amination of UTP to CTP with either L-glutamine or ammonia as the source of nitrogen. Regulates intracellular CTP levels through interactions with the four ribonucleotide triphosphates. This chain is CTP synthase, found in Chlamydia felis (strain Fe/C-56) (Chlamydophila felis).